We begin with the raw amino-acid sequence, 670 residues long: Transcription factor 4 (670 aa).

An essential for MYOD1 inhibition region spans residues 1–83 (MHHQQRMAAL…GTPYDHMTSR (83 aa)). 6 disordered regions span residues 24-244 (AMFS…LGNS), 262-320 (LSYP…SQTG), 335-378 (HTNN…EGPL), 406-426 (PSTAVPGGHGDMHGIMGPSHN), 465-573 (SLLP…MANN), and 637-670 (KRREEEKVSSEPPPLSLAGPHPGMGDAANHMGQM). The segment covering 29–49 (PVSSGKNGPTSLASGHFTGSN) has biased composition (polar residues). A phosphoserine mark is found at Ser-66, Ser-87, and Ser-92. 4 stretches are compositionally biased toward polar residues: residues 107-125 (GSYSSYGRENVQGCHQQSL), 136-154 (GTLSPTKPGSQYYQYSSNN), 205-215 (PAASTFPSSFF), and 265-305 (PSHS…TDSI). Over residues 336–347 (TNNSFSSNPSTP) the composition is skewed to low complexity. Residues 364 to 373 (NGGQASSSPN) show a composition bias toward polar residues. Phosphoserine is present on Ser-371. A leucine-zipper region spans residues 378–399 (LHSLQSRIEDRLERLDDAIHVL). 2 stretches are compositionally biased toward low complexity: residues 466–479 (LLPNQVPVPQLPVQ) and 502–511 (GQSVSSGSSE). Ser-514 is subject to Phosphoserine. Composition is skewed to basic and acidic residues over residues 526 to 542 (KSSEDKKLDDDKKDIKS) and 558 to 573 (PEQKAEREKERRMANN). The bHLH domain occupies 567–620 (ERRMANNARERLRVRDINEAFKELGRMVQLHLKSDKPQTKLLILHQAVAVILSL). The segment at 622–645 (QQVRERNLNPKAACLKRREEEKVS) is class A specific domain.

As to quaternary structure, efficient DNA binding requires dimerization with another bHLH protein. Isoform 2 seems to form inactive heterodimers with MYOD1. Interacts with HIVEP2. Interacts with NEUROD2. Interacts with AGBL1. Interacts with BHLHA9. As to expression, expressed in the cerebral cortex, Purkinje and granule cell layers of the cerebellum, olfactory neuroepithelium, pyramidal cells of hippocampal layers CA1-CA4, and in the granular cells of the dentate gyrus.

The protein resides in the nucleus. Its function is as follows. Transcription factor that binds to the immunoglobulin enhancer Mu-E5/KE5-motif. Involved in the initiation of neuronal differentiation. Activates transcription by binding to the E box (5'-CANNTG-3'). Isoform 2 inhibits MYOD1 activation of the cardiac alpha-actin promoter. Binds to the E-box present in the somatostatin receptor 2 initiator element (SSTR2-INR) to activate transcription. May have a regulatory function in developmental processes as well as during neuronal plasticity. In Mus musculus (Mouse), this protein is Transcription factor 4 (Tcf4).